An 82-amino-acid chain; its full sequence is ATP synthase subunit c, chloroplastic (82 aa).

The next 2 membrane-spanning stretches (helical) occupy residues 3-23 (PIIS…AAIG) and 57-77 (LAFM…LLFA).

This sequence belongs to the ATPase C chain family. As to quaternary structure, F-type ATPases have 2 components, F(1) - the catalytic core - and F(0) - the membrane proton channel. F(1) has five subunits: alpha(3), beta(3), gamma(1), delta(1), epsilon(1). F(0) has four main subunits: a(1), b(1), b'(1) and c(10-14). The alpha and beta chains form an alternating ring which encloses part of the gamma chain. F(1) is attached to F(0) by a central stalk formed by the gamma and epsilon chains, while a peripheral stalk is formed by the delta, b and b' chains.

It localises to the plastid. Its subcellular location is the chloroplast thylakoid membrane. Functionally, f(1)F(0) ATP synthase produces ATP from ADP in the presence of a proton or sodium gradient. F-type ATPases consist of two structural domains, F(1) containing the extramembraneous catalytic core and F(0) containing the membrane proton channel, linked together by a central stalk and a peripheral stalk. During catalysis, ATP synthesis in the catalytic domain of F(1) is coupled via a rotary mechanism of the central stalk subunits to proton translocation. Key component of the F(0) channel; it plays a direct role in translocation across the membrane. A homomeric c-ring of between 10-14 subunits forms the central stalk rotor element with the F(1) delta and epsilon subunits. The sequence is that of ATP synthase subunit c, chloroplastic from Phaeodactylum tricornutum (strain CCAP 1055/1).